The primary structure comprises 423 residues: Histidine--tRNA ligase (423 aa).

Belongs to the class-II aminoacyl-tRNA synthetase family. Homodimer.

It localises to the cytoplasm. The enzyme catalyses tRNA(His) + L-histidine + ATP = L-histidyl-tRNA(His) + AMP + diphosphate + H(+). The polypeptide is Histidine--tRNA ligase (Orientia tsutsugamushi (strain Boryong) (Rickettsia tsutsugamushi)).